We begin with the raw amino-acid sequence, 460 residues long: Piperamide synthase (460 aa).

The disordered stretch occupies residues 1–23; sequence MASSQLEFNVERKQPELLGPAEP. Catalysis depends on proton acceptor residues H168 and D383. The Microbody targeting signal signature appears at 458-460; sequence SRM.

Belongs to the plant acyltransferase family. Monomer. As to expression, confined to immature fruits perisperm. Also detectable in roots.

Its subcellular location is the cytoplasm. It catalyses the reaction piperidine + (E,E)-piperoyl-CoA = piperine + CoA + H(+). It functions in the pathway aromatic compound metabolism. In terms of biological role, involved in the biosynthesis of aromatic piperamides natural products such as piperine (1-piperoyl-piperidine), the pungent principle contributing, together with several terpenoids, to the aromatic properties of black pepper fruits, and displaying numerous pharmacological activities such as antiproliferative, antitumor, antiangiogenesis, antioxidant, antidiabetic, antiobesity, cardioprotective, antimicrobial, antiaging, and immunomodulatory effects. Can use piperidine and benzylamine as acceptors and various CoA-esters with aliphatic and aromatic amines as CoA-donors, including piperoyl-CoA, hexanoyl-CoA and octanoyl-CoA, and, to a lower extent, benzoyl-CoA. Mediates the conversion of piperidine to three piperine isomers in the presence of piperoyl-CoA. Its ability to convert in vitro piperidine to hexanoylpiperidine in the presence of hexanoyl-CoA, and to octanoylpiperidine in the presence of octanoyl-CoA is not confirmed in vivo according to fruits metabolome analysis. The chain is Piperamide synthase from Piper nigrum (Black pepper).